An 808-amino-acid chain; its full sequence is Probable ATP-dependent helicase MJ1401 (808 aa).

A Q motif motif is present at residues 189–217 (YKIDELDIPEELKEIIKSRGIEELLPVQT). One can recognise a Helicase ATP-binding domain in the interval 221 to 391 (KAGLLNGDDL…QLNAKLVLYN (171 aa)). 234-241 (SATSSGKT) serves as a coordination point for ATP. The short motif at 336–339 (DEIH) is the DEIH box element. The 190-residue stretch at 396–585 (PLERHIIFCK…EDEEEEQILA (190 aa)) folds into the Helicase C-terminal domain.

This sequence belongs to the DEAD box helicase family.

The polypeptide is Probable ATP-dependent helicase MJ1401 (Methanocaldococcus jannaschii (strain ATCC 43067 / DSM 2661 / JAL-1 / JCM 10045 / NBRC 100440) (Methanococcus jannaschii)).